A 314-amino-acid polypeptide reads, in one-letter code: Fructose-1,6-bisphosphatase class 1 (314 aa).

Residues Glu-91, Asp-112, Leu-114, and Asp-115 each coordinate Mg(2+). Substrate is bound by residues Asp-115–Ser-118, Tyr-223, and Lys-254. Residue Glu-260 participates in Mg(2+) binding.

The protein belongs to the FBPase class 1 family. As to quaternary structure, homotetramer. Requires Mg(2+) as cofactor.

The protein resides in the cytoplasm. The catalysed reaction is beta-D-fructose 1,6-bisphosphate + H2O = beta-D-fructose 6-phosphate + phosphate. Its pathway is carbohydrate biosynthesis; gluconeogenesis. In Geobacter metallireducens (strain ATCC 53774 / DSM 7210 / GS-15), this protein is Fructose-1,6-bisphosphatase class 1.